Reading from the N-terminus, the 405-residue chain is MAEEGYVAIVTGATGLNGAAIIKRLSEDDNCKTIHCISRSLKDEYPRKIKHHSIDLLNEEPKDIAKKFSLEGVKGINYAYFAAYKEENNEEKLCEVNGNMLRNFVQALELTSIQTLRRVILTTGLKFYGLHLGEVRLPMIETDIRVPETFSGTPNFYYVQEDILKEFSNGKKWDYTIAMPNDICGVSKGSYMNEAFTIALYALVCRELHEPFRFPGNEKFYLGFDDISYSKLIADFQLWMTFKAECSEEKFNIVNGDIHSWSRTWPKIAEYFGVEVPKNQFATDFTLSTEVTLSTPSPINLYEKELGIKHTPNSKIINQISLQQWVKQKKVQDAWRTIAEREKLNAHALEVGTWAFCDFLFGRTYNVISSMSKARKLGYTDYYDTFDGFKETFDELKKQKQIPQN.

This is an uncharacterized protein from Schizosaccharomyces pombe (strain 972 / ATCC 24843) (Fission yeast).